The chain runs to 478 residues: BTB/POZ domain-containing protein 17 (478 aa).

An N-terminal signal peptide occupies residues 1–28 (MPRRGYSKPGSWGSFWAMLTLVGLVTHA). Residues asparagine 61, asparagine 100, and asparagine 195 are each glycosylated (N-linked (GlcNAc...) asparagine). The 70-residue stretch at 63-132 (SDVVLRVQAA…LYCGELTVLL (70 aa)) folds into the BTB domain. The region spanning 169–269 (AVGWYHYAVG…IPPAQLFQLQ (101 aa)) is the BACK domain.

The protein resides in the secreted. The chain is BTB/POZ domain-containing protein 17 (BTBD17) from Homo sapiens (Human).